The sequence spans 306 residues: MNQYKNFIMQFEDIVGNNNVLIDEPMKKHTSFKVGGPADLLITPTTLEQVKDSIILCRNNSIPYYIIGNGSNLLVRDGGIRGVVIKFLKLGDIKVEGDRVIAQSGAPLTNICNEALKSNLGGLEFACGIPGSVGGAVTMNAGAYNGEISQVIESAKVIDKDGNVFLLNKEQLDLGYRMSAIQKYHYIVLEVTFKLHNSEYDTIKNRIMDLNRRRTEKQPLEYPSAGSTFKRPEGHFAAKLIEDTGLKGESIGGAQVSEKHSGFIINKGGATAGDILNLIEFVQNKVMEKFEVDLHTEVRIIGEENN.

The region spanning Val-34 to Ser-198 is the FAD-binding PCMH-type domain. Arg-177 is an active-site residue. Ser-227 functions as the Proton donor in the catalytic mechanism. Residue Glu-297 is part of the active site.

The protein belongs to the MurB family. Requires FAD as cofactor.

Its subcellular location is the cytoplasm. It carries out the reaction UDP-N-acetyl-alpha-D-muramate + NADP(+) = UDP-N-acetyl-3-O-(1-carboxyvinyl)-alpha-D-glucosamine + NADPH + H(+). It functions in the pathway cell wall biogenesis; peptidoglycan biosynthesis. Cell wall formation. This is UDP-N-acetylenolpyruvoylglucosamine reductase from Clostridium botulinum (strain ATCC 19397 / Type A).